The primary structure comprises 621 residues: ATP-dependent DNA helicase Q1 (621 aa).

The Helicase ATP-binding domain maps to 100–275 (VNATMARKDI…QKILCVEKCL (176 aa)). ATP is bound at residue 113-120 (MPTGGGKS). A DEVH box motif is present at residues 219-222 (DEVH). The Helicase C-terminal domain occupies 296-451 (SAEDFIENIA…EMVSYCQNIS (156 aa)). Zn(2+) is bound by residues Cys-453, Cys-471, Cys-475, and Cys-478. N6-acetyllysine is present on residues Lys-514 and Lys-522. Ser-597 and Ser-602 each carry phosphoserine.

Belongs to the helicase family. RecQ subfamily. May form homodimers or higher order oligomers. Interacts with EXO1. Interacts with MLH1. Interacts with PARP1. Mg(2+) is required as a cofactor. Mn(2+) serves as cofactor. The cofactor is Zn(2+).

It localises to the nucleus. It carries out the reaction Couples ATP hydrolysis with the unwinding of duplex DNA by translocating in the 3'-5' direction.. The catalysed reaction is ATP + H2O = ADP + phosphate + H(+). The enzyme catalyses dATP + H2O = dADP + phosphate + H(+). Functionally, DNA helicase that plays a role in DNA damage repair and genome stability. Exhibits a magnesium- and ATP-dependent DNA-helicase activity that unwinds single- and double-stranded DNA in a 3'-5' direction. Plays a role in restoring regressed replication forks. Required to restart stalled replication forks induced by abortive topoisomerase 1 and 2 lesions. May play a role in the repair of DNA that is damaged by ultraviolet light or other mutagens. This chain is ATP-dependent DNA helicase Q1 (Recql), found in Rattus norvegicus (Rat).